A 91-amino-acid chain; its full sequence is Putative membrane protein insertion efficiency factor (91 aa).

The interval 66–91 (GGVDPVPSCGCHSDKETTPKEKSDNA) is disordered. The span at 77 to 91 (HSDKETTPKEKSDNA) shows a compositional bias: basic and acidic residues.

It belongs to the UPF0161 family.

Its subcellular location is the cell inner membrane. In terms of biological role, could be involved in insertion of integral membrane proteins into the membrane. In Hydrogenovibrio crunogenus (strain DSM 25203 / XCL-2) (Thiomicrospira crunogena), this protein is Putative membrane protein insertion efficiency factor.